Here is a 1221-residue protein sequence, read N- to C-terminus: DNA-directed RNA polymerase subunit beta' (1221 aa).

Zn(2+)-binding residues include Cys60, Cys62, Cys75, and Cys78. Residues Asp449, Asp451, and Asp453 each contribute to the Mg(2+) site. The Zn(2+) site is built by Cys821, Cys896, Cys903, and Cys906.

Belongs to the RNA polymerase beta' chain family. As to quaternary structure, the RNAP catalytic core consists of 2 alpha, 1 beta, 1 beta' and 1 omega subunit. When a sigma factor is associated with the core the holoenzyme is formed, which can initiate transcription. It depends on Mg(2+) as a cofactor. Zn(2+) serves as cofactor.

The enzyme catalyses RNA(n) + a ribonucleoside 5'-triphosphate = RNA(n+1) + diphosphate. DNA-dependent RNA polymerase catalyzes the transcription of DNA into RNA using the four ribonucleoside triphosphates as substrates. This Lactobacillus delbrueckii subsp. bulgaricus (strain ATCC BAA-365 / Lb-18) protein is DNA-directed RNA polymerase subunit beta'.